We begin with the raw amino-acid sequence, 217 residues long: Homeobox protein Hox-B7 (217 aa).

The short motif at 126–131 (IYPWMR) is the Antp-type hexapeptide element. The homeobox DNA-binding region spans 137-196 (RKRGRQTYTRYQTLELEKEFHYNRYLTRRRRIEIAHTLCLTERQIKIWFQNRRMKWKKEN). The interval 192–217 (WKKENKTSGPGTTGQDKAEAEEEEEE) is disordered.

This sequence belongs to the Antp homeobox family. Forms a DNA-binding heterodimer with transcription factor PBX1.

Its subcellular location is the nucleus. Sequence-specific transcription factor which is part of a developmental regulatory system that provides cells with specific positional identities on the anterior-posterior axis. The protein is Homeobox protein Hox-B7 (Hoxb7) of Mus musculus (Mouse).